The chain runs to 364 residues: Dihydroorotate dehydrogenase (quinone) (364 aa).

Residues 61-65 (AGFDK) and serine 85 contribute to the FMN site. Position 65 (lysine 65) interacts with substrate. 110–114 (NRMGF) contacts substrate. 2 residues coordinate FMN: asparagine 139 and asparagine 170. Asparagine 170 lines the substrate pocket. Serine 173 (nucleophile) is an active-site residue. Position 175 (asparagine 175) interacts with substrate. Positions 214 and 242 each coordinate FMN. Substrate is bound at residue 243-244 (NT). Residues glycine 266, glycine 295, and 316–317 (YS) contribute to the FMN site.

The protein belongs to the dihydroorotate dehydrogenase family. Type 2 subfamily. Monomer. Requires FMN as cofactor.

It is found in the cell membrane. It carries out the reaction (S)-dihydroorotate + a quinone = orotate + a quinol. It participates in pyrimidine metabolism; UMP biosynthesis via de novo pathway; orotate from (S)-dihydroorotate (quinone route): step 1/1. Catalyzes the conversion of dihydroorotate to orotate with quinone as electron acceptor. This chain is Dihydroorotate dehydrogenase (quinone), found in Bradyrhizobium sp. (strain BTAi1 / ATCC BAA-1182).